Reading from the N-terminus, the 437-residue chain is ATP-dependent RNA helicase RhlB (437 aa).

The short motif at 9–37 (QKFADLGLQPQVTEGLEKKGFEYCTPIQA) is the Q motif element. One can recognise a Helicase ATP-binding domain in the interval 40 to 219 (LPVLLTGQDI…FEHMHNPEHV (180 aa)). 53–60 (AQTGTGKT) contributes to the ATP binding site. The short motif at 165 to 168 (DEAD) is the DEAD box element. The region spanning 245-390 (ALLQTLIEEE…VSEYDASALI (146 aa)) is the Helicase C-terminal domain. The tract at residues 397–437 (IRMRAPRVQQRRTNTGGTRSGNRKPQGRRPRQPRQSAPKQS) is disordered. Basic residues predominate over residues 417–428 (GNRKPQGRRPRQ).

Belongs to the DEAD box helicase family. RhlB subfamily. In terms of assembly, component of the RNA degradosome, which is a multiprotein complex involved in RNA processing and mRNA degradation.

The protein resides in the cytoplasm. It carries out the reaction ATP + H2O = ADP + phosphate + H(+). Functionally, DEAD-box RNA helicase involved in RNA degradation. Has RNA-dependent ATPase activity and unwinds double-stranded RNA. The sequence is that of ATP-dependent RNA helicase RhlB from Vibrio parahaemolyticus serotype O3:K6 (strain RIMD 2210633).